The chain runs to 95 residues: FXYD domain-containing ion transport regulator 6 (95 aa).

Positions 1 to 18 are cleaved as a signal peptide; that stretch reads MELVLVFLCSLLAPMVLA. The Extracellular portion of the chain corresponds to 19 to 35; sequence SAAEKEKEMDPFHYDYQ. Residues 36–57 traverse the membrane as a helical segment; it reads TLRIGGLVFAVVLFSVGILLIL. Topologically, residues 58–95 are cytoplasmic; sequence SRRCKCSFNQKPRAPGDEEAQVENLITANATEPQKAEN. The tract at residues 69–95 is disordered; it reads PRAPGDEEAQVENLITANATEPQKAEN.

Belongs to the FXYD family. In terms of assembly, regulatory subunit of the sodium/potassium-transporting ATPase which is composed of a catalytic alpha subunit, a non-catalytic beta subunit and an additional regulatory subunit. The regulatory subunit, a member of the FXYD protein family, modulates the enzymatic activity in a tissue- and isoform-specific way by changing affinities of the Na+/K+-ATPase toward Na(+), K(+) or ATP.

It localises to the cell membrane. Its function is as follows. Associates with and regulates the activity of the sodium/potassium-transporting ATPase (NKA) which catalyzes the hydrolysis of ATP coupled with the exchange of Na(+) and K(+) ions across the plasma membrane. Reduces the apparent affinity for intracellular Na(+) with no change in the apparent affinity for extracellular K(+). In addition to modulating NKA kinetics, may also function as a regulator of NKA localization to the plasma membrane. The sequence is that of FXYD domain-containing ion transport regulator 6 from Homo sapiens (Human).